We begin with the raw amino-acid sequence, 762 residues long: Protein PHTF1 (762 aa).

A PHTF domain is found at 6 to 150; the sequence is RDAISWYQKK…VHCQIVSTQI (145 aa). Helical transmembrane passes span 77–97, 99–119, and 121–141; these read GLVR…VTSL, IFVW…LYFM, and PIVN…MGTV. Positions 152-188 are disordered; it reads RPSGNNGNRRRRKLRKTVNGDGSRENGNNSSDKARGV. N-linked (GlcNAc...) asparagine glycosylation is found at Asn179, Asn180, and Asn197. A phosphoserine mark is found at Ser272, Ser276, Ser277, Ser334, and Ser336. 2 disordered regions span residues 344–379 and 393–415; these read SAAF…SETE and RSSV…TKRD. The segment covering 348–361 has biased composition (low complexity); that stretch reads SQGSRSGMSGGSRS. Over residues 365–376 the composition is skewed to basic and acidic residues; that stretch reads LRRDSESTRHDS. Asn431 is a glycosylation site (N-linked (GlcNAc...) asparagine). Transmembrane regions (helical) follow at residues 473-493, 512-532, 611-631, and 645-665; these read GVGY…FPFL, EILT…LSII, VVVS…CAQV, and WEFL…ASLG. Asn674 and Asn733 each carry an N-linked (GlcNAc...) asparagine glycan. A helical transmembrane segment spans residues 737–757; the sequence is VVILSAVSGVISDLLGFNIRL.

As to quaternary structure, interacts with FEM1B.

It is found in the endoplasmic reticulum membrane. It localises to the golgi apparatus. The protein localises to the cis-Golgi network membrane. This Bos taurus (Bovine) protein is Protein PHTF1 (PHTF1).